The chain runs to 410 residues: Cytochrome P450 105A3 (410 aa).

Cys359 contacts heme.

This sequence belongs to the cytochrome P450 family. As to quaternary structure, monomer. Heme serves as cofactor.

Its function is as follows. Catalyzes the hydroxylation of sodium ML-236B carboxylate to pravastatin. This chain is Cytochrome P450 105A3 (cyp105A3), found in Streptomyces carbophilus.